The primary structure comprises 467 residues: MAP kinase-interacting serine/threonine-protein kinase 2 (467 aa).

The region spanning Gln-83–Val-367 is the Protein kinase domain. ATP is bound by residues Leu-89–Val-97 and Lys-112. Asp-204 (proton acceptor) is an active-site residue. Residues Cys-298, Cys-310, and Cys-313 each coordinate Zn(2+). The segment at Met-432–Asp-467 is disordered.

This sequence belongs to the protein kinase superfamily. CAMK Ser/Thr protein kinase family. It depends on Mg(2+) as a cofactor. Zn(2+) serves as cofactor.

The catalysed reaction is L-seryl-[protein] + ATP = O-phospho-L-seryl-[protein] + ADP + H(+). It catalyses the reaction L-threonyl-[protein] + ATP = O-phospho-L-threonyl-[protein] + ADP + H(+). May play a role in the response to environmental stress and cytokines. Appears to regulate translation by phosphorylating EIF4E, thus increasing the affinity of this protein for the 7-methylguanosine-containing mRNA cap. This Xenopus laevis (African clawed frog) protein is MAP kinase-interacting serine/threonine-protein kinase 2 (mknk2).